The sequence spans 1030 residues: MMS19 nucleotide excision repair protein homolog (1030 aa).

A2 carries the post-translational modification N-acetylalanine. 4 HEAT repeats span residues 866-904 (QRFFTDNVPALVRGFHAAPQDVKPNYLKGLSHVLNRLPK), 908-946 (LPELPTLLSLLLEALSCPDSVVQLSTLSCLQPLLLEAPQ), 949-987 (SLHVDTLITKFLNLSASPSMAVRIAALQCMHALTRLPTP), and 990-1028 (LPYKPQVIRALAKPLDDKKRLVRKEAVSARGEWFLLGSP). S1027 is modified (phosphoserine).

Belongs to the MET18/MMS19 family. In terms of assembly, component of the CIA complex. In the CIA complex, interacts directly with CIAO2B and CIAO3. Component of the MMXD complex, composed of CIAO1, ERCC2, CIAO2B, MMS19 and SLC25A5. Interacts with CIAO2B; the interaction is direct. Interacts with ERCC2/XPD; the interaction is direct. Interacts with ERCC3/XPB and NCOA3/RAC3. Interacts with RTEL1; the interaction mediates the association of RTEL1 with the CIA complex. Interacts with BRIP1. Interacts with KIF4A; the interaction facilitates the transfer of Fe-S clusters to KIF4A to ensure proper localization of KIF4A to the mitotic machinery components. Interacts with CCDC117; the interaction is indirect. In terms of processing, ubiquitinated; undergoes 'Lys-48'-linked polyubiquitination.

The protein localises to the nucleus. Its subcellular location is the cytoplasm. The protein resides in the cytoskeleton. It is found in the spindle. Key component of the cytosolic iron-sulfur protein assembly (CIA) complex, a multiprotein complex that mediates the incorporation of iron-sulfur cluster into apoproteins specifically involved in DNA metabolism and genomic integrity. In the CIA complex, MMS19 acts as an adapter between early-acting CIA components and a subset of cellular target Fe/S proteins such as ERCC2/XPD, FANCJ and RTEL1, thereby playing a key role in nucleotide excision repair (NER), homologous recombination-mediated double-strand break DNA repair, DNA replication and RNA polymerase II (POL II) transcription. As a CIA complex component and in collaboration with CIAO1 and CIAO2, binds to and facilitates the assembly of most cytosolic-nuclear Fe/S proteins. As part of the mitotic spindle-associated MMXD complex, plays a role in chromosome segregation, probably by facilitating iron-sulfur cluster assembly into ERCC2/XPD. Together with CIAO2, facilitates the transfer of Fe-S clusters to the motor protein KIF4A, which ensures proper localization of KIF4A to mitotic machinery components to promote the progression of mitosis. Indirectly acts as a transcriptional coactivator of estrogen receptor (ER), via its role in iron-sulfur insertion into some component of the TFIIH-machinery. The protein is MMS19 nucleotide excision repair protein homolog of Bos taurus (Bovine).